The chain runs to 178 residues: Large ribosomal subunit protein uL6 (178 aa).

Belongs to the universal ribosomal protein uL6 family. In terms of assembly, part of the 50S ribosomal subunit.

This protein binds to the 23S rRNA, and is important in its secondary structure. It is located near the subunit interface in the base of the L7/L12 stalk, and near the tRNA binding site of the peptidyltransferase center. The polypeptide is Large ribosomal subunit protein uL6 (Opitutus terrae (strain DSM 11246 / JCM 15787 / PB90-1)).